The following is a 353-amino-acid chain: Photosystem II D2 protein (353 aa).

An N-acetylthreonine modification is found at Thr-2. Thr-2 is subject to Phosphothreonine. Residues 41 to 61 (CAYFALGGWFTGTTFVTSWYT) traverse the membrane as a helical segment. His-118 provides a ligand contact to chlorophyll a. Residues 125–141 (GFMLRQFELARSVQLRP) traverse the membrane as a helical segment. The pheophytin a site is built by Gln-130 and Asn-143. A helical transmembrane segment spans residues 153-166 (VFVSVFLIYPLGQS). Position 198 (His-198) interacts with chlorophyll a. The chain crosses the membrane as a helical span at residues 208-228 (AALLCAIHGATVENTLFEDGD). His-215 and Phe-262 together coordinate a plastoquinone. His-215 contacts Fe cation. Fe cation is bound at residue His-269. Residues 279–295 (GLWMSALGVVGLALNLR) traverse the membrane as a helical segment.

The protein belongs to the reaction center PufL/M/PsbA/D family. In terms of assembly, PSII is composed of 1 copy each of membrane proteins PsbA, PsbB, PsbC, PsbD, PsbE, PsbF, PsbH, PsbI, PsbJ, PsbK, PsbL, PsbM, PsbT, PsbX, PsbY, PsbZ, Psb30/Ycf12, at least 3 peripheral proteins of the oxygen-evolving complex and a large number of cofactors. It forms dimeric complexes. It depends on The D1/D2 heterodimer binds P680, chlorophylls that are the primary electron donor of PSII, and subsequent electron acceptors. It shares a non-heme iron and each subunit binds pheophytin, quinone, additional chlorophylls, carotenoids and lipids. There is also a Cl(-1) ion associated with D1 and D2, which is required for oxygen evolution. The PSII complex binds additional chlorophylls, carotenoids and specific lipids. as a cofactor.

The protein localises to the plastid. It is found in the chloroplast thylakoid membrane. The enzyme catalyses 2 a plastoquinone + 4 hnu + 2 H2O = 2 a plastoquinol + O2. Photosystem II (PSII) is a light-driven water:plastoquinone oxidoreductase that uses light energy to abstract electrons from H(2)O, generating O(2) and a proton gradient subsequently used for ATP formation. It consists of a core antenna complex that captures photons, and an electron transfer chain that converts photonic excitation into a charge separation. The D1/D2 (PsbA/PsbD) reaction center heterodimer binds P680, the primary electron donor of PSII as well as several subsequent electron acceptors. D2 is needed for assembly of a stable PSII complex. In Pelargonium hortorum (Common geranium), this protein is Photosystem II D2 protein.